A 442-amino-acid chain; its full sequence is tRNA modification GTPase MnmE (442 aa).

Positions 22, 79, and 119 each coordinate (6S)-5-formyl-5,6,7,8-tetrahydrofolate. Residues 216–366 (GIKTCLVGAP…LLEKIKSIFA (151 aa)) enclose the TrmE-type G domain. Residue Asn226 participates in K(+) binding. GTP is bound by residues 226 to 231 (NSGKSS), 245 to 251 (SEIPGTT), and 270 to 273 (DTAG). Ser230 contributes to the Mg(2+) binding site. Ser245, Ile247, and Thr250 together coordinate K(+). Thr251 contributes to the Mg(2+) binding site. Residue Lys442 coordinates (6S)-5-formyl-5,6,7,8-tetrahydrofolate.

This sequence belongs to the TRAFAC class TrmE-Era-EngA-EngB-Septin-like GTPase superfamily. TrmE GTPase family. As to quaternary structure, homodimer. Heterotetramer of two MnmE and two MnmG subunits. K(+) serves as cofactor.

Its subcellular location is the cytoplasm. In terms of biological role, exhibits a very high intrinsic GTPase hydrolysis rate. Involved in the addition of a carboxymethylaminomethyl (cmnm) group at the wobble position (U34) of certain tRNAs, forming tRNA-cmnm(5)s(2)U34. The sequence is that of tRNA modification GTPase MnmE from Mesomycoplasma hyopneumoniae (strain 7448) (Mycoplasma hyopneumoniae).